The chain runs to 31 residues: Photosystem II reaction center protein T (31 aa).

The chain crosses the membrane as a helical span at residues 3–23; it reads SVAYILVLTMALSVIFFAIAF.

The protein belongs to the PsbT family. In terms of assembly, PSII is composed of 1 copy each of membrane proteins PsbA, PsbB, PsbC, PsbD, PsbE, PsbF, PsbH, PsbI, PsbJ, PsbK, PsbL, PsbM, PsbT, PsbX, PsbY, PsbZ, Psb30/Ycf12, peripheral proteins PsbO, CyanoQ (PsbQ), PsbU, PsbV and a large number of cofactors. It forms dimeric complexes.

The protein localises to the cellular thylakoid membrane. In terms of biological role, found at the monomer-monomer interface of the photosystem II (PS II) dimer, plays a role in assembly and dimerization of PSII. PSII is a light-driven water plastoquinone oxidoreductase, using light energy to abstract electrons from H(2)O, generating a proton gradient subsequently used for ATP formation. The polypeptide is Photosystem II reaction center protein T (Microcystis aeruginosa (strain NIES-843 / IAM M-2473)).